Consider the following 421-residue polypeptide: MLTKAPRGTKDILPQESSKWHALEETAKKISNLYGFNEVRFPIFEHTELFTRSVGETSDIVSKEMYTFTDRGDRSLTLRPEGTAPAARLYVEHKLFNEPQPVKYYYIGPMFRYDRPQAGRYRQFHQFGVEVFGSLEPETDVEVMKLLLDYFEALGLSGLELKLNSVGCKECRQKYLNELSNYFEGKIDHICQDCYQRYQTNPMRVLDCKKKSCREAIGEDVPLIVNYLCQDCATHFDKVKEILTSLNLPYQIDPHLVRGLDYYTKTAFEVVMPSLGAQDALGGGGRYDYLVEECGGPPTPGVGFAVGLERILLALEQKEINLDQEEKLDFYFIATGEEAKQEAFKLLATVREEGYSAVMDFERRSMRAQMKRANKANARFSLILGEAELNEQTCQIKDMEAGEQFQVPLKSFEERIKEIAG.

This sequence belongs to the class-II aminoacyl-tRNA synthetase family. As to quaternary structure, homodimer.

It localises to the cytoplasm. The enzyme catalyses tRNA(His) + L-histidine + ATP = L-histidyl-tRNA(His) + AMP + diphosphate + H(+). In Natranaerobius thermophilus (strain ATCC BAA-1301 / DSM 18059 / JW/NM-WN-LF), this protein is Histidine--tRNA ligase.